Reading from the N-terminus, the 380-residue chain is Cytochrome b (380 aa).

The next 4 membrane-spanning stretches (helical) occupy residues 34 to 54, 78 to 99, 114 to 134, and 179 to 199; these read FGSL…LLAM, WLIR…YLHI, WNTG…GYVL, and FFAL…IHLT. Heme b-binding residues include His84 and His98. Residues His183 and His197 each contribute to the heme b site. His202 is a binding site for a ubiquinone. 4 consecutive transmembrane segments (helical) span residues 227–247, 289–309, 321–341, and 348–368; these read LKDL…ALFT, LGGV…PFLH, LSQL…WVGS, and FIII…VLLP.

This sequence belongs to the cytochrome b family. The cytochrome bc1 complex contains 11 subunits: 3 respiratory subunits (MT-CYB, CYC1 and UQCRFS1), 2 core proteins (UQCRC1 and UQCRC2) and 6 low-molecular weight proteins (UQCRH/QCR6, UQCRB/QCR7, UQCRQ/QCR8, UQCR10/QCR9, UQCR11/QCR10 and a cleavage product of UQCRFS1). This cytochrome bc1 complex then forms a dimer. Heme b is required as a cofactor.

It is found in the mitochondrion inner membrane. Functionally, component of the ubiquinol-cytochrome c reductase complex (complex III or cytochrome b-c1 complex) that is part of the mitochondrial respiratory chain. The b-c1 complex mediates electron transfer from ubiquinol to cytochrome c. Contributes to the generation of a proton gradient across the mitochondrial membrane that is then used for ATP synthesis. This Herpetotheres cachinnans (Laughing falcon) protein is Cytochrome b (MT-CYB).